An 865-amino-acid chain; its full sequence is Protein translocase subunit SecA (865 aa).

ATP contacts are provided by residues glutamine 93, 111–115 (GEGKT), and aspartate 501. Zn(2+) contacts are provided by cysteine 841, cysteine 843, cysteine 852, and cysteine 853.

Belongs to the SecA family. As to quaternary structure, monomer and homodimer. Part of the essential Sec protein translocation apparatus which comprises SecA, SecYEG and auxiliary proteins SecDF-YajC and YidC. Zn(2+) is required as a cofactor.

Its subcellular location is the cell inner membrane. It localises to the cytoplasm. It carries out the reaction ATP + H2O + cellular proteinSide 1 = ADP + phosphate + cellular proteinSide 2.. Functionally, part of the Sec protein translocase complex. Interacts with the SecYEG preprotein conducting channel. Has a central role in coupling the hydrolysis of ATP to the transfer of proteins into and across the cell membrane, serving as an ATP-driven molecular motor driving the stepwise translocation of polypeptide chains across the membrane. The polypeptide is Protein translocase subunit SecA (Helicobacter pylori (strain G27)).